The following is an 89-amino-acid chain: uncharacterized protein (89 aa).

This is an uncharacterized protein from Dictyostelium discoideum (Social amoeba).